We begin with the raw amino-acid sequence, 297 residues long: L-ribulose 3-epimerase (297 aa).

Glutamate 147 (proton donor/acceptor) is an active-site residue. Position 147 (glutamate 147) interacts with Mn(2+). Residues glutamate 153 and 180–183 (DTFH) each bind substrate. 2 residues coordinate Mn(2+): aspartate 180 and histidine 206. Residue arginine 212 participates in substrate binding. Glutamate 241 serves as the catalytic Proton donor/acceptor. Glutamate 241 is a binding site for Mn(2+).

This sequence belongs to the hyi family. In terms of assembly, homotetramer. Requires Mn(2+) as cofactor.

It carries out the reaction L-ribulose = L-xylulose. The catalysed reaction is keto-D-tagatose = keto-D-sorbose. It catalyses the reaction D-allulose = keto-D-fructose. Its activity is regulated as follows. Strongly inhibited by Co(2+) and Ni(2+), and slightly inhibited by EDTA. In terms of biological role, catalyzes the epimerization of various ketoses at the C(3) position. It is able to interconvert L-ribulose with high efficiency. The enzyme can also accept other ketopentoses such as D-psicose and D-tagatose with lower efficiency. In Mesorhizobium japonicum (strain LMG 29417 / CECT 9101 / MAFF 303099) (Mesorhizobium loti (strain MAFF 303099)), this protein is L-ribulose 3-epimerase.